Here is a 534-residue protein sequence, read N- to C-terminus: MKNQDQALIFEVSKEGRIGYSLPKLDVEEVKLEDVFESDYIRVEDAELPEVSELDIMRHYTALSNRNHGVDSGFYPLGSCTMKYNPKINESVARFAGFANIHPLQDEKTVQGAMELMYDLQEHLIEITGMDTVTLQPAAGAHGEWTGLMLIRAYHEANGDFNRTKVIVPDSAHGTNPASATVAGFETITVKSNENGLVDLEDLKRVVNEETAALMLTNPNTLGLFEENILEMAEIVHNAGGKLYYDGANLNAVLSQARPGDMGFDVVHLNLHKTFTGPHGGGGPGSGPVGVKADLIPYLPKPILEKTESGYHFNYDRPEAIGRVKPFYGNFGINVRAYTYIRSMGPDGLRAVTEYAVLNANYMMRRLAPFYDLPFDRHCKHEFVLSGRRQKKLGVRTLDIAKRLLDFGYHPPTIYFPLNVEECIMIEPTETESKETLDGFIDKMIQIAKEVEENPEVVQEAPHTTVIKRLDETMAARKTSFTLCKASSCTSLIRITKEELAEVGSFFVWRICPALTDSKLPTQNLAGAKKPGGR.

Lys273 carries the N6-(pyridoxal phosphate)lysine modification.

It belongs to the GcvP family. C-terminal subunit subfamily. As to quaternary structure, the glycine cleavage system is composed of four proteins: P, T, L and H. In this organism, the P 'protein' is a heterodimer of two subunits. It depends on pyridoxal 5'-phosphate as a cofactor.

It catalyses the reaction N(6)-[(R)-lipoyl]-L-lysyl-[glycine-cleavage complex H protein] + glycine + H(+) = N(6)-[(R)-S(8)-aminomethyldihydrolipoyl]-L-lysyl-[glycine-cleavage complex H protein] + CO2. Functionally, the glycine cleavage system catalyzes the degradation of glycine. The P protein binds the alpha-amino group of glycine through its pyridoxal phosphate cofactor; CO(2) is released and the remaining methylamine moiety is then transferred to the lipoamide cofactor of the H protein. This chain is Probable glycine dehydrogenase (decarboxylating) subunit 2, found in Bacillus cereus (strain ATCC 14579 / DSM 31 / CCUG 7414 / JCM 2152 / NBRC 15305 / NCIMB 9373 / NCTC 2599 / NRRL B-3711).